The chain runs to 381 residues: uncharacterized protein (381 aa).

Disordered regions lie at residues 1–20 (MPYYTRDDNDVDDFDEFDPT) and 36–381 (IPPS…EDDE). Acidic residues predominate over residues 9 to 18 (NDVDDFDEFD). Basic and acidic residues-rich tracts occupy residues 166 to 175 (TEVEYGRRPE) and 186 to 237 (SESE…EGYR). Serine 339, serine 346, and serine 357 each carry phosphoserine. Basic residues predominate over residues 364–374 (KKHRHKHHHQK).

This is an uncharacterized protein from Arabidopsis thaliana (Mouse-ear cress).